We begin with the raw amino-acid sequence, 436 residues long: GTPase Der (436 aa).

EngA-type G domains are found at residues 4–167 (PTVA…PVEE) and 175–351 (IRFS…ESQN). Residues 10–17 (GRPNVGKS), 57–61 (DTGGI), 119–122 (NKVD), 181–188 (GRPNVGKS), 229–233 (DTAGM), and 294–297 (NKWD) contribute to the GTP site. The region spanning 352 to 436 (KRIPSAVLND…PIHLIARKRK (85 aa)) is the KH-like domain.

The protein belongs to the TRAFAC class TrmE-Era-EngA-EngB-Septin-like GTPase superfamily. EngA (Der) GTPase family. As to quaternary structure, associates with the 50S ribosomal subunit.

In terms of biological role, GTPase that plays an essential role in the late steps of ribosome biogenesis. The sequence is that of GTPase Der from Streptococcus pyogenes serotype M5 (strain Manfredo).